The sequence spans 284 residues: RNase adapter protein RapZ (284 aa).

ATP is bound at residue Gly8 to Ser15. Asp56–Asn59 lines the GTP pocket. An RNA-binding region spans residues Arg266 to Gln284.

The protein belongs to the RapZ-like family. RapZ subfamily. In terms of assembly, homotrimer.

Its function is as follows. Modulates the synthesis of GlmS, by affecting the processing and stability of the regulatory small RNA GlmZ. When glucosamine-6-phosphate (GlcN6P) concentrations are high in the cell, RapZ binds GlmZ and targets it to cleavage by RNase E. Consequently, GlmZ is inactivated and unable to activate GlmS synthesis. Under low GlcN6P concentrations, RapZ is sequestered and inactivated by an other regulatory small RNA, GlmY, preventing GlmZ degradation and leading to synthesis of GlmS. This Serratia proteamaculans (strain 568) protein is RNase adapter protein RapZ.